The chain runs to 269 residues: 5'-nucleotidase SurE (269 aa).

The a divalent metal cation site is built by aspartate 11, aspartate 12, serine 42, and asparagine 90.

This sequence belongs to the SurE nucleotidase family. Requires a divalent metal cation as cofactor.

Its subcellular location is the cytoplasm. The catalysed reaction is a ribonucleoside 5'-phosphate + H2O = a ribonucleoside + phosphate. In terms of biological role, nucleotidase that shows phosphatase activity on nucleoside 5'-monophosphates. The sequence is that of 5'-nucleotidase SurE from Haloarcula marismortui (strain ATCC 43049 / DSM 3752 / JCM 8966 / VKM B-1809) (Halobacterium marismortui).